Here is a 400-residue protein sequence, read N- to C-terminus: MRVAGIIVEYNPFHNGHLYHLQKTREITNADIVVGVMSGNFIQRGEPAIVNKWARTKMAILNGVDVIFELPFAYACNSAEIFAYGAISILNQLGVDFIVFGSECGDIDKLKETAKHLAFEEDDFKSSLKSYLKEGYSFPKARELALIKTCKTNIEFSSNNILGIEYIKWIYRLNSKIEPFTIRRIGASYNDPNLTQDTYASATAIRRNINNLHAIKNKMPSVSYEILLEEFESGRGPVILEDYFKLFIYNAIVVPDFLKNKIDVKEGLENRFEKYIFNSPSAKNLLENVKTKRYTLTRLQRIFIHAIVRNNFDQKALLSITPYVRVLGFNYKGKEYLNKIKDKIEYITKLNQQWLKNPQYKELLELEIRSSMLHALQYKDFHKYLQTEFKSSPIYISSRS.

ATP-binding positions include 7–20, glycine 101, asparagine 159, and 184–185; these read IVEY…HLYH and RI.

The protein belongs to the TmcAL family.

The protein localises to the cytoplasm. It carries out the reaction cytidine(34) in elongator tRNA(Met) + acetate + ATP = N(4)-acetylcytidine(34) in elongator tRNA(Met) + AMP + diphosphate. In terms of biological role, catalyzes the formation of N(4)-acetylcytidine (ac(4)C) at the wobble position of elongator tRNA(Met), using acetate and ATP as substrates. First activates an acetate ion to form acetyladenylate (Ac-AMP) and then transfers the acetyl group to tRNA to form ac(4)C34. The polypeptide is tRNA(Met) cytidine acetate ligase (Caldicellulosiruptor bescii (strain ATCC BAA-1888 / DSM 6725 / KCTC 15123 / Z-1320) (Anaerocellum thermophilum)).